Consider the following 1098-residue polypeptide: Mediator of RNA polymerase II transcription subunit 5 (1098 aa).

The disordered stretch occupies residues 1019-1041; that stretch reads PDDVQKSADMKPDTGIKEDDSEK. Residues 1021–1041 show a composition bias toward basic and acidic residues; the sequence is DVQKSADMKPDTGIKEDDSEK.

This sequence belongs to the Mediator complex subunit 5 family. Component of the Mediator complex.

The protein resides in the nucleus. In terms of biological role, component of the Mediator complex, a coactivator involved in the regulated transcription of nearly all RNA polymerase II-dependent genes. Mediator functions as a bridge to convey information from gene-specific regulatory proteins to the basal RNA polymerase II transcription machinery. Mediator is recruited to promoters by direct interactions with regulatory proteins and serves as a scaffold for the assembly of a functional preinitiation complex with RNA polymerase II and the general transcription factors. This chain is Mediator of RNA polymerase II transcription subunit 5 (NUT1), found in Eremothecium gossypii (strain ATCC 10895 / CBS 109.51 / FGSC 9923 / NRRL Y-1056) (Yeast).